Consider the following 1220-residue polypeptide: MPGLLNWITGAALPLTASDVTSCVSGYALGLTASLTYGNLEAQPFQGLFVYPLDECTTVIGFEAVIADRVVTVQIKDKAKLESGHFDASHVRSPTVTGNILQDGVSIAPHSCTPGKVTLDEDLERILFVANLGTIAPMENVTIFISTSSELPTLPSGAVRVLLPAVCAPTVPQFCTKSTGTSNQQAQGKDRHCFGAWAPGSWNKLCLATLLNTEVSNPMEYEFNFQLEIRGPCLLAGVESPTHEIRADAAPSARSAKSIIITLANKHTFDRPVEILIHPSEPHMPHVLIEKGDMTLGEFDQHLKGRTDFIKGMKKKSRAERKTEIIRKRLHKDIPHHSVIMLNFCPDLQSVQPCLRKAHGEFIFLIDRSSSMSGISMHRVKDAMLVALKSLMPACLFNIIGFGSTFKSLFPSSQTYSEDSLAMACDDIQRMKADMGGTNILSPLKWVIRQPVHRGHPRLLFVITDGAVNNTGKVLELVRNHAFSTRCYSFGIGPNVCHRLVKGLASVSEGSAELLMEGERLQPKMVKSLKKAMAPVLSDVTVEWIFPETTEVLVSPVSASSLFPGERLVGYGIVCDASLHISNPRSDKRRRYSMLHSQESGSSVFYHSQDDGPGLEGGDCAKNSGAPFILGQAKNARLASGDSTTKHDLNLSQRRRAYSTNQITNHKPLPRATMASDPMPAAKRYPLRKARLQDLTNQTSLDVQRWQIDLQPLLNSGQDLNQGPKLRGPGARRPSLLPQGCQPFLPWGQETQAWSPVRERTSDSRSPGDLEPSHHPSAFETETSSDWDPPAESQERASPSRPATPAPVLGKALVKGLHDSQRLQWEVSFELGTPGPERGGAQDADLWSETFHHLAARAIIRDFEQLAEREGEIEQGSNRRYQVSALHTSKACNIISKYTAFVPVDVSKSRYLPTVVEYPNSAALRMLGSRALAQQWRGTSSGFGRPQTMLGEDSAPGNGKFQALNMEASPTALFSEARSPGREKHGASEGPQRSLATNTLSSMKASENLFGSWLNLNKSRLLTRAAKGFLSKPLIKAVESTSGNQSFDYIPLVSLQLASGAFLLNEAFCEATHIPMEKLKWTSPFTCHRVSLTTRPSESKTPSPQLCTSSPPRHPSCDSFSLEPLAKGKLGLEPRAVVEHTGKLWATVVGLAWLEHSSASYFTEWELVAAKANSWLEQQEVPEGRTQGTLKAAARQLFVLLRHWDENLEFNMLCYNPNYV.

The N-terminal stretch at 1-18 is a signal peptide; that stretch reads MPGLLNWITGAALPLTAS. A VIT domain is found at 19–149; that stretch reads DVTSCVSGYA…NVTIFISTSS (131 aa). An N-linked (GlcNAc...) asparagine glycan is attached at Asn140. Residues 361-529 form the VWFA domain; the sequence is EFIFLIDRSS…RLQPKMVKSL (169 aa). A glycan (N-linked (GlcNAc...) asparagine) is linked at Asn650. The segment at 715–807 is disordered; it reads NSGQDLNQGP…SPSRPATPAP (93 aa). Residues 757-774 show a composition bias toward basic and acidic residues; sequence VRERTSDSRSPGDLEPSH. Low complexity predominate over residues 796–807; that stretch reads RASPSRPATPAP. At Tyr881 the chain carries Phosphotyrosine. Disordered stretches follow at residues 937–962 and 976–995; these read RGTSSGFGRPQTMLGEDSAPGNGKFQ and EARSPGREKHGASEGPQRSL. Asn1017 carries an N-linked (GlcNAc...) asparagine glycan. The span at 1093-1111 shows a compositional bias: polar residues; it reads TTRPSESKTPSPQLCTSSP. The tract at residues 1093–1115 is disordered; it reads TTRPSESKTPSPQLCTSSPPRHP.

The protein localises to the secreted. The protein is von Willebrand factor A domain-containing protein 5B1 (VWA5B1) of Homo sapiens (Human).